We begin with the raw amino-acid sequence, 167 residues long: Lipoprotein signal peptidase (167 aa).

The next 2 helical transmembrane spans lie at 56-76 and 84-104; these read FAPPFVLLMLTGAIVLGVLVF and TPIFLSAFGLIAGGGIGNMID. Residues Asp113 and Asp139 contribute to the active site. A helical membrane pass occupies residues 132–152; it reads WPIFNVADSAITIGACMLVLF.

The protein belongs to the peptidase A8 family.

The protein resides in the cell inner membrane. It catalyses the reaction Release of signal peptides from bacterial membrane prolipoproteins. Hydrolyzes -Xaa-Yaa-Zaa-|-(S,diacylglyceryl)Cys-, in which Xaa is hydrophobic (preferably Leu), and Yaa (Ala or Ser) and Zaa (Gly or Ala) have small, neutral side chains.. It functions in the pathway protein modification; lipoprotein biosynthesis (signal peptide cleavage). Functionally, this protein specifically catalyzes the removal of signal peptides from prolipoproteins. This is Lipoprotein signal peptidase from Chlorobium luteolum (strain DSM 273 / BCRC 81028 / 2530) (Pelodictyon luteolum).